Consider the following 475-residue polypeptide: GTPase Der (475 aa).

2 consecutive EngA-type G domains span residues leucine 2 to glutamate 166 and leucine 213 to serine 386. GTP contacts are provided by residues glycine 8–serine 15, aspartate 55–valine 59, asparagine 118–aspartate 121, glycine 219–serine 226, aspartate 266–leucine 270, and asparagine 331–aspartate 334. The KH-like domain maps to arginine 387–alanine 471.

It belongs to the TRAFAC class TrmE-Era-EngA-EngB-Septin-like GTPase superfamily. EngA (Der) GTPase family. In terms of assembly, associates with the 50S ribosomal subunit.

Its function is as follows. GTPase that plays an essential role in the late steps of ribosome biogenesis. This is GTPase Der from Chlamydia felis (strain Fe/C-56) (Chlamydophila felis).